Here is a 205-residue protein sequence, read N- to C-terminus: Ras-related protein Rab-18-B (205 aa).

GTP is bound by residues S17, G20, K21, S22, S23, D34, P35, T40, G66, K123, D125, and A152. S22 contacts Mg(2+). 2 consecutive short sequence motifs (switch) follow at residues 31–45 (DTFDPELAATIGVDF) and 63–80 (DTAGQERFRTLTPSYYRG). Position 40 (T40) interacts with Mg(2+). The S-palmitoyl cysteine moiety is linked to residue C198. C202 is modified (cysteine methyl ester). C202 is lipidated: S-geranylgeranyl cysteine. Residues 203–205 (SLV) constitute a propeptide, removed in mature form.

The protein belongs to the small GTPase superfamily. Rab family. Mg(2+) serves as cofactor.

The protein resides in the endoplasmic reticulum membrane. The protein localises to the golgi apparatus. It is found in the cis-Golgi network membrane. It localises to the lipid droplet. Its subcellular location is the apical cell membrane. The catalysed reaction is GTP + H2O = GDP + phosphate + H(+). Its activity is regulated as follows. Regulated by guanine nucleotide exchange factors (GEFs) which promote the exchange of bound GDP for free GTP. Regulated by GTPase activating proteins (GAPs) which increase the GTP hydrolysis activity at the ER membrane. Inhibited by GDP dissociation inhibitors (GDIs) which prevent Rab-GDP dissociation. Functionally, the small GTPases Rab are key regulators of intracellular membrane trafficking, from the formation of transport vesicles to their fusion with membranes. Rabs cycle between an inactive GDP-bound form and an active GTP-bound form that is able to recruit to membranes different sets of downstream effectors directly responsible for vesicle formation, movement, tethering and fusion. Required for the localization of ZFYVE1 to lipid droplets and for its function in mediating the formation of endoplasmic reticulum-lipid droplets (ER-LD) contacts. Also required for maintaining endoplasmic reticulum structure. Plays a role in apical endocytosis/recycling. Plays a key role in eye and brain development and neurodegeneration. This Danio rerio (Zebrafish) protein is Ras-related protein Rab-18-B (rab18b).